The primary structure comprises 249 residues: Proteasome activator complex subunit 1 (249 aa).

A disordered region spans residues 55–102 (SNLKAPLDIPVPDPVKEKEKEERRKQQEKEDKDEKKKGEDEDKGPPCG). Residues 68–98 (PVKEKEKEERRKQQEKEDKDEKKKGEDEDKG) are compositionally biased toward basic and acidic residues.

This sequence belongs to the PA28 family. In terms of assembly, heterodimer of PSME1 and PSME2, which forms a hexameric ring. PSME1 can form homoheptamers.

Functionally, implicated in immunoproteasome assembly and required for efficient antigen processing. The PA28 activator complex enhances the generation of class I binding peptides by altering the cleavage pattern of the proteasome. This Bos taurus (Bovine) protein is Proteasome activator complex subunit 1 (PSME1).